Consider the following 202-residue polypeptide: Nucleoside triphosphate pyrophosphatase (202 aa).

The active-site Proton acceptor is the aspartate 79.

The protein belongs to the Maf family. Requires a divalent metal cation as cofactor.

Its subcellular location is the cytoplasm. It catalyses the reaction a ribonucleoside 5'-triphosphate + H2O = a ribonucleoside 5'-phosphate + diphosphate + H(+). The enzyme catalyses a 2'-deoxyribonucleoside 5'-triphosphate + H2O = a 2'-deoxyribonucleoside 5'-phosphate + diphosphate + H(+). In terms of biological role, nucleoside triphosphate pyrophosphatase. May have a dual role in cell division arrest and in preventing the incorporation of modified nucleotides into cellular nucleic acids. The chain is Nucleoside triphosphate pyrophosphatase from Nitrobacter hamburgensis (strain DSM 10229 / NCIMB 13809 / X14).